The sequence spans 507 residues: Transcription factor SOX-9 (507 aa).

Disordered regions lie at residues 1-67 (MNLL…SEED) and 160-250 (RLRV…AGKV). Low complexity predominate over residues 30–41 (SAGSPCPSGSGS). Over residues 42–52 (DTENTRPQENT) the composition is skewed to polar residues. 2 stretches are compositionally biased toward basic and acidic residues: residues 56 to 67 (GEPDLKKESEED) and 160 to 174 (RLRVQHKKDHPDYKY). The segment at 63–103 (ESEEDKFPVCIREAVSQVLKGYDWTLVPMPVRVNGSSKNKP) is dimerization (DIM). Residues 63-103 (ESEEDKFPVCIREAVSQVLKGYDWTLVPMPVRVNGSSKNKP) are PQA. Ser-64 is modified (phosphoserine; by PKA). The HMG box DNA-binding region spans 105–173 (VKRPMNAFMV…QHKKDHPDYK (69 aa)). A Phosphoserine; by PKA modification is found at Ser-211. Residues 224–307 (PGEHSGQSQG…LPPNGHPGVP (84 aa)) are transactivation domain (TAM). Short sequence motifs (9aaTAD) lie at residues 275–284 (IGELSSDVIS) and 290–298 (DVNEFDQYL). Residues 335 to 429 (WMSKQQAPPP…PFNLPHYSPS (95 aa)) form a disordered region. The span at 341–369 (APPPPPQQPPQAPQAPQAPPQQQAPPQQP) shows a compositional bias: pro residues. The span at 378 to 420 (HTLTTLSSEPGQSQRTHIKTEQLSPSHYSEQQQHSPQQISYSP) shows a compositional bias: polar residues. The interval 392 to 507 (RTHIKTEQLS…QPVYTQLTRP (116 aa)) is transactivation domain (TAC). Lys-396 is covalently cross-linked (Glycyl lysine isopeptide (Lys-Gly) (interchain with G-Cter in ubiquitin)). The short motif at 458–466 (SGLYSTFTY) is the 9aaTAD 3 element. Positions 477-507 (PIADTSGVPSIPQTHSPQHWEQPVYTQLTRP) are disordered. Polar residues predominate over residues 483-507 (GVPSIPQTHSPQHWEQPVYTQLTRP).

Homodimer; homodimerization is required for activity. Interacts (via C-terminus) with ZNF219; forming a complex that binds to the COL2A1 promoter and activates COL2A1 expression. Interacts with DDRGK1. Interacts with EP300/p300. Interacts with beta-catenin (CTNNB1); inhibiting CTNNB1 activity by competing with the binding sites of TCF/LEF within CTNNB1. Post-translationally, acetylated; acetylation impairs nuclear localization and ability to transactivate expression of target genes. Deacetylated by SIRT1. Phosphorylation at Ser-64 and Ser-211 by PKA increases transcriptional activity and may help delay chondrocyte maturation downstream of PTHLH/PTHrP signaling. Phosphorylation at either Ser-64 or Ser-211 is required for sumoylation, but phosphorylation is not dependent on sumoylation. Phosphorylated on tyrosine residues; tyrosine dephosphorylation by PTPN11/SHP2 blocks SOX9 phosphorylation by PKA and subsequent SUMOylation. In terms of processing, sumoylated; phosphorylation at either Ser-64 or Ser-211 is required for sumoylation. Sumoylation is induced by BMP signaling pathway. Post-translationally, ubiquitinated; ubiquitination leads to proteasomal degradation and is negatively regulated by DDRGK1. In terms of tissue distribution, expressed in the intestinal epithelium (at protein level). Expressed in progenitor cells in various organs, including chondroprogenitors, osteoprogenitors and preadipocytes, but is not expressed in most differentiated cell types such as osteoblasts and adipocytes, with the exception of chondrocytes. Highly expressed in developing chondrogenic tissues. Also expressed in some non-chondrogenic tissues such as notochord, otic vesicle and neural tube.

Its subcellular location is the nucleus. Transcription factor that plays a key role in chondrocytes differentiation and skeletal development. Specifically binds the 5'-ACAAAG-3' DNA motif present in enhancers and super-enhancers and promotes expression of genes important for chondrogenesis, including cartilage matrix protein-coding genes COL2A1, COL4A2, COL9A1, COL11A2 and ACAN, SOX5 and SOX6. Also binds to some promoter regions. Plays a central role in successive steps of chondrocyte differentiation. Absolutely required for precartilaginous condensation, the first step in chondrogenesis during which skeletal progenitors differentiate into prechondrocytes. Together with SOX5 and SOX6, required for overt chondrogenesis when condensed prechondrocytes differentiate into early stage chondrocytes, the second step in chondrogenesis. Later, required to direct hypertrophic maturation and block osteoblast differentiation of growth plate chondrocytes: maintains chondrocyte columnar proliferation, delays prehypertrophy and then prevents osteoblastic differentiation of chondrocytes by lowering beta-catenin (CTNNB1) signaling and RUNX2 expression. Also required for chondrocyte hypertrophy, both indirectly, by keeping the lineage fate of chondrocytes, and directly, by remaining present in upper hypertrophic cells and transactivating COL10A1 along with MEF2C. Low lipid levels are the main nutritional determinant for chondrogenic commitment of skeletal progenitor cells: when lipids levels are low, FOXO (FOXO1 and FOXO3) transcription factors promote expression of SOX9, which induces chondrogenic commitment and suppresses fatty acid oxidation. Mechanistically, helps, but is not required, to remove epigenetic signatures of transcriptional repression and deposit active promoter and enhancer marks at chondrocyte-specific genes. Acts in cooperation with the Hedgehog pathway-dependent GLI (GLI1 and GLI3) transcription factors. In addition to cartilage development, also acts as a regulator of proliferation and differentiation in epithelial stem/progenitor cells: involved in the lung epithelium during branching morphogenesis, by balancing proliferation and differentiation and regulating the extracellular matrix. Controls epithelial branching during kidney development. This is Transcription factor SOX-9 from Mus musculus (Mouse).